The primary structure comprises 276 residues: WIMGHMVNKIEQINEFLDLGANSIEVDITFDNLGYAEYTYHGFPCDCKRWCTNQENVKEYLNALSDITTPGNPKFRKEQTLVVFDLKTGGIDANRMYEGGKDFAGKILFDYWKGSENAGRAYIIISVPSIDHYKFMKGFRERFDGSAFKDLLLEKVGWDFSGNDDLDATRTAYQNAGIEALNHIWQSDGITNCIPRGLGRVNKAVSNRDSSDAFINKVYVWTVEKYSSVKDALSADVDGIMTNHPNVINGVLKEDEFKDRFKLATYEDNPWTTFKR.

His-5 is a catalytic residue. Glu-25 and Asp-27 together coordinate Mg(2+). The Nucleophile role is filled by His-41. Disulfide bonds link Cys-45/Cys-51 and Cys-47/Cys-193. Residue Asp-85 participates in Mg(2+) binding.

It belongs to the arthropod phospholipase D family. Class II subfamily. Mg(2+) serves as cofactor. In terms of tissue distribution, expressed by the venom gland.

The protein resides in the secreted. It carries out the reaction an N-(acyl)-sphingosylphosphocholine = an N-(acyl)-sphingosyl-1,3-cyclic phosphate + choline. It catalyses the reaction an N-(acyl)-sphingosylphosphoethanolamine = an N-(acyl)-sphingosyl-1,3-cyclic phosphate + ethanolamine. The catalysed reaction is a 1-acyl-sn-glycero-3-phosphocholine = a 1-acyl-sn-glycero-2,3-cyclic phosphate + choline. The enzyme catalyses a 1-acyl-sn-glycero-3-phosphoethanolamine = a 1-acyl-sn-glycero-2,3-cyclic phosphate + ethanolamine. Functionally, dermonecrotic toxins cleave the phosphodiester linkage between the phosphate and headgroup of certain phospholipids (sphingolipid and lysolipid substrates), forming an alcohol (often choline) and a cyclic phosphate. This toxin acts on sphingomyelin (SM). It may also act on ceramide phosphoethanolamine (CPE), lysophosphatidylcholine (LPC) and lysophosphatidylethanolamine (LPE), but not on lysophosphatidylserine (LPS), and lysophosphatidylglycerol (LPG). It acts by transphosphatidylation, releasing exclusively cyclic phosphate products as second products. Induces dermonecrosis, hemolysis, increased vascular permeability, edema, inflammatory response, and platelet aggregation. In Loxosceles laeta (South American recluse spider), this protein is Dermonecrotic toxin LlSicTox-alphaIV1ii.